The chain runs to 221 residues: Ribosomal RNA small subunit methyltransferase G (221 aa).

S-adenosyl-L-methionine contacts are provided by residues glycine 83, phenylalanine 88, 132-133 (LE), and arginine 146.

It belongs to the methyltransferase superfamily. RNA methyltransferase RsmG family.

It localises to the cytoplasm. The enzyme catalyses guanosine(527) in 16S rRNA + S-adenosyl-L-methionine = N(7)-methylguanosine(527) in 16S rRNA + S-adenosyl-L-homocysteine. Specifically methylates the N7 position of guanine in position 527 of 16S rRNA. This chain is Ribosomal RNA small subunit methyltransferase G, found in Zymomonas mobilis subsp. mobilis (strain ATCC 31821 / ZM4 / CP4).